The primary structure comprises 162 residues: Probable E3 ubiquitin-protein ligase XERICO (162 aa).

Residues 12-28 (GMLCVILVNTALSISIV) traverse the membrane as a helical segment. An RING-type; atypical zinc finger spans residues 103 to 145 (CSVCLSKFQGDSEINKLKCGHLFHKTCLEKWIDYWNITCPLCR).

Interacts with UBC8 and TULP9. In terms of tissue distribution, ubiquitous. Higher expression in actively growing tissues.

It is found in the membrane. The catalysed reaction is S-ubiquitinyl-[E2 ubiquitin-conjugating enzyme]-L-cysteine + [acceptor protein]-L-lysine = [E2 ubiquitin-conjugating enzyme]-L-cysteine + N(6)-ubiquitinyl-[acceptor protein]-L-lysine.. It participates in protein modification; protein ubiquitination. Its function is as follows. Function on abscisic acid homeostasis at post-translational level, probably through ubiquitin/proteasome-dependent substrate-specific degradation. The sequence is that of Probable E3 ubiquitin-protein ligase XERICO (XERICO) from Arabidopsis thaliana (Mouse-ear cress).